Reading from the N-terminus, the 221-residue chain is Urease accessory protein UreE (221 aa).

Residues Val160–Lys194 form a disordered region. The span at Thr177–Lys194 shows a compositional bias: basic and acidic residues.

It belongs to the UreE family.

It localises to the cytoplasm. In terms of biological role, involved in urease metallocenter assembly. Binds nickel. Probably functions as a nickel donor during metallocenter assembly. The sequence is that of Urease accessory protein UreE from Bifidobacterium longum subsp. infantis (strain ATCC 15697 / DSM 20088 / JCM 1222 / NCTC 11817 / S12).